The chain runs to 227 residues: Ribonuclease 3 (227 aa).

Positions 3–130 (TNAISKIIKY…LIGAIYLDGG (128 aa)) constitute an RNase III domain. E43 contributes to the Mg(2+) binding site. Residue D47 is part of the active site. The Mg(2+) site is built by N116 and E119. E119 is an active-site residue. The DRBM domain maps to 155–224 (DAKTILQEWA…ASLMLAKINY (70 aa)).

Belongs to the ribonuclease III family. In terms of assembly, homodimer. Mg(2+) is required as a cofactor.

It is found in the cytoplasm. It carries out the reaction Endonucleolytic cleavage to 5'-phosphomonoester.. Functionally, digests double-stranded RNA. Involved in the processing of primary rRNA transcript to yield the immediate precursors to the large and small rRNAs (23S and 16S). Processes some mRNAs, and tRNAs when they are encoded in the rRNA operon. Processes pre-crRNA and tracrRNA of type II CRISPR loci if present in the organism. The chain is Ribonuclease 3 from Ehrlichia ruminantium (strain Welgevonden).